A 648-amino-acid polypeptide reads, in one-letter code: MTEINIEFPDGSVKPFEQGVSILDIAKSISTSLAKKAVAGKINGALVRLDQAINENVKIEIVTKDSEDGNIVNWNSAALVLTSAIESIYPGVHFGEIGNGEHGFYVDTDKVDQQISVDQLPAIEDKMKDIIKSKISLKHSEISVEEALASVDGDPYQAKIVKRNEKNGKVSVYDVDGKIIVSDNVALLSTSDMKAVKLLSVAGAYWEGKSSNPMLQRIYGTSFYKQKDLEAELERQKEAHERDHRVIGNNLDLFFVDPKVGAGLPYWMPNGATIRRSIERYIIDKEVKHGYQHVYTPVLMNLDAYKTSGHWQHYREDMFPPMDMGDGEMLELRPMNCPSHIQVYKHHIRSYRELPIRIAELGMMHRYEKSGALSGLQRVREMTLNDGHTFVAPDQIQAEFKKVLQLMVEVYRDFNITDYTFRLSYRDPANTEKYFDDDEMWNKSQSMLKAAMDDLGLDYVEAEGEAAFYGPKLDVQTKTALGNEETLSTIQLDFMLPKQFDLHYVGADGEEHRPVMIHRGLVSTMERFTAYLIEMYKGAFPTWLAPKQVTIIPVKDDLHGAYADKLREEMVDKDIRVEVDHRNEKMGYKIREAQTQKIPYILVVGDNELENNSVSVRHYGEDDSKNEASADFINNIVREIESYSREND.

Residues 1–63 (MTEINIEFPD…NENVKIEIVT (63 aa)) form the TGS domain. Residues 243–541 (DHRVIGNNLD…LIEMYKGAFP (299 aa)) form a catalytic region. Positions 337, 388, and 518 each coordinate Zn(2+).

This sequence belongs to the class-II aminoacyl-tRNA synthetase family. As to quaternary structure, homodimer. Zn(2+) serves as cofactor.

Its subcellular location is the cytoplasm. The enzyme catalyses tRNA(Thr) + L-threonine + ATP = L-threonyl-tRNA(Thr) + AMP + diphosphate + H(+). Its function is as follows. Catalyzes the attachment of threonine to tRNA(Thr) in a two-step reaction: L-threonine is first activated by ATP to form Thr-AMP and then transferred to the acceptor end of tRNA(Thr). Also edits incorrectly charged L-seryl-tRNA(Thr). In Pediococcus pentosaceus (strain ATCC 25745 / CCUG 21536 / LMG 10740 / 183-1w), this protein is Threonine--tRNA ligase.